Here is a 362-residue protein sequence, read N- to C-terminus: 3-dehydroquinate synthase (362 aa).

Residues 74-79 (DGEGYK), 108-112 (GVIGD), 132-133 (TT), lysine 145, lysine 154, and 172-175 (TLDT) contribute to the NAD(+) site. The Zn(2+) site is built by glutamate 187, histidine 250, and histidine 267.

Belongs to the sugar phosphate cyclases superfamily. Dehydroquinate synthase family. Requires Co(2+) as cofactor. Zn(2+) is required as a cofactor. It depends on NAD(+) as a cofactor.

It localises to the cytoplasm. The enzyme catalyses 7-phospho-2-dehydro-3-deoxy-D-arabino-heptonate = 3-dehydroquinate + phosphate. It participates in metabolic intermediate biosynthesis; chorismate biosynthesis; chorismate from D-erythrose 4-phosphate and phosphoenolpyruvate: step 2/7. Its function is as follows. Catalyzes the conversion of 3-deoxy-D-arabino-heptulosonate 7-phosphate (DAHP) to dehydroquinate (DHQ). In Geobacter sp. (strain M21), this protein is 3-dehydroquinate synthase.